Reading from the N-terminus, the 103-residue chain is Flagellar hook-basal body complex protein FliE (103 aa).

This sequence belongs to the FliE family.

It is found in the bacterial flagellum basal body. This is Flagellar hook-basal body complex protein FliE from Photorhabdus laumondii subsp. laumondii (strain DSM 15139 / CIP 105565 / TT01) (Photorhabdus luminescens subsp. laumondii).